The chain runs to 104 residues: MQPNDITFFQRFQNDILAGRKTITIRDASESHFKAGDVLRVGRFEDDGYFCTIEVTGTSTVTLDTLNEKHAQQENMSLDELKRVIAEIYPNQTQFYVIDFKCLR.

An ASCH domain is found at 6 to 94 (ITFFQRFQND…IAEIYPNQTQ (89 aa)). Residue K21 is the Proton acceptor of the active site. The active-site Nucleophile is the T24. E74 serves as the catalytic Proton donor.

This sequence belongs to the N(4)-acetylcytidine amidohydrolase family.

It carries out the reaction N(4)-acetylcytidine + H2O = cytidine + acetate + H(+). The catalysed reaction is N(4)-acetyl-2'-deoxycytidine + H2O = 2'-deoxycytidine + acetate + H(+). It catalyses the reaction N(4)-acetylcytosine + H2O = cytosine + acetate + H(+). Catalyzes the hydrolysis of N(4)-acetylcytidine (ac4C). This chain is N(4)-acetylcytidine amidohydrolase (yqfB), found in Salmonella agona (strain SL483).